The following is a 348-amino-acid chain: Alpha-2-HS-glycoprotein (348 aa).

A signal peptide spans 1–18; that stretch reads MKTLVLLLCFTLLWGCQS. In terms of domain architecture, Cystatin fetuin-A-type 1 spans 19–133; it reads APQGTGLGFR…QFSVMHTKCH (115 aa). 6 disulfide bridges follow: C32–C339, C89–C100, C114–C132, C146–C149, C208–C219, and C230–C247. N99 carries an N-linked (GlcNAc...) asparagine glycan. 2 positions are modified to phosphoserine: S134 and S138. Residues 144–255 enclose the Cystatin fetuin-A-type 2 domain; that stretch reads KVCPHCALLT…TCTAFPTQAN (112 aa). Residues N156 and N176 are each glycosylated (N-linked (GlcNAc...) asparagine). Residues S307, S311, S314, and S316 each carry the phosphoserine modification.

Belongs to the fetuin family. In terms of processing, phosphorylated by FAM20C in the extracellular medium. Expressed by the liver and secreted in plasma.

The protein resides in the secreted. The chain is Alpha-2-HS-glycoprotein (AHSG) from Meriones unguiculatus (Mongolian jird).